Reading from the N-terminus, the 140-residue chain is Small ribosomal subunit protein uS12m (140 aa).

This sequence belongs to the universal ribosomal protein uS12 family.

The protein localises to the mitochondrion. The sequence is that of Small ribosomal subunit protein uS12m (mrps12) from Dictyostelium citrinum (Slime mold).